The following is a 105-amino-acid chain: Met repressor (105 aa).

It belongs to the MetJ family. Homodimer.

Its subcellular location is the cytoplasm. Functionally, this regulatory protein, when combined with SAM (S-adenosylmethionine) represses the expression of the methionine regulon and of enzymes involved in SAM synthesis. This is Met repressor from Actinobacillus pleuropneumoniae serotype 7 (strain AP76).